We begin with the raw amino-acid sequence, 58 residues long: MIYRKWSLLSSTILIWGGAATAGLAGVFLFNAKEKFQKYLSGEGQRLRQQDRAAMGKN.

In terms of assembly, component of complex II composed of eight subunits in plants: four classical SDH subunits SDH1, SDH2, SDH3 and SDH4 (a flavoprotein (FP), an iron-sulfur protein (IP), and a cytochrome b composed of a large and a small subunit.), as well as four subunits unknown in mitochondria from bacteria and heterotrophic eukaryotes.

It is found in the mitochondrion inner membrane. It functions in the pathway carbohydrate metabolism; tricarboxylic acid cycle. In Oryza sativa subsp. japonica (Rice), this protein is Succinate dehydrogenase subunit 8B, mitochondrial.